The chain runs to 422 residues: Glutamate 2,3-aminomutase (422 aa).

One can recognise a Radical SAM core domain in the interval 150-371 (RRYPDRLIIN…AIPTYIVNAP (222 aa)). The [4Fe-4S] cluster site is built by Cys164, Cys168, and Cys171. Position 376 is an N6-(pyridoxal phosphate)lysine (Lys376).

The protein belongs to the radical SAM superfamily. The cofactor is pyridoxal 5'-phosphate. Requires [4Fe-4S] cluster as cofactor.

The catalysed reaction is L-glutamate = 3-aminopentanedioate. Functionally, catalyzes the interconversion of L-glutamate and L-beta-glutamate. Does not have L-lysine 2,3-aminomutase activity. This chain is Glutamate 2,3-aminomutase (eam), found in Clostridioides difficile (strain 630) (Peptoclostridium difficile).